A 295-amino-acid polypeptide reads, in one-letter code: Ribosomal RNA small subunit methyltransferase A (295 aa).

S-adenosyl-L-methionine-binding residues include Asn-31, Leu-33, Gly-58, Glu-79, Asp-104, and Asn-129.

The protein belongs to the class I-like SAM-binding methyltransferase superfamily. rRNA adenine N(6)-methyltransferase family. RsmA subfamily.

The protein localises to the cytoplasm. It catalyses the reaction adenosine(1518)/adenosine(1519) in 16S rRNA + 4 S-adenosyl-L-methionine = N(6)-dimethyladenosine(1518)/N(6)-dimethyladenosine(1519) in 16S rRNA + 4 S-adenosyl-L-homocysteine + 4 H(+). Specifically dimethylates two adjacent adenosines (A1518 and A1519) in the loop of a conserved hairpin near the 3'-end of 16S rRNA in the 30S particle. May play a critical role in biogenesis of 30S subunits. The chain is Ribosomal RNA small subunit methyltransferase A from Leuconostoc citreum (strain KM20).